Here is a 265-residue protein sequence, read N- to C-terminus: Phosphatidylserine decarboxylase proenzyme (265 aa).

Catalysis depends on Ser183, which acts as the Schiff-base intermediate with substrate; via pyruvic acid. Residue Ser183 is modified to Pyruvic acid (Ser); by autocatalysis. The tract at residues 216 to 246 is disordered; the sequence is TAPQTESEPESEPALQTAPVETAANPSAEQR.

It belongs to the phosphatidylserine decarboxylase family. PSD-A subfamily. Heterodimer of a large membrane-associated beta subunit and a small pyruvoyl-containing alpha subunit. Requires pyruvate as cofactor. Post-translationally, is synthesized initially as an inactive proenzyme. Formation of the active enzyme involves a self-maturation process in which the active site pyruvoyl group is generated from an internal serine residue via an autocatalytic post-translational modification. Two non-identical subunits are generated from the proenzyme in this reaction, and the pyruvate is formed at the N-terminus of the alpha chain, which is derived from the carboxyl end of the proenzyme. The post-translation cleavage follows an unusual pathway, termed non-hydrolytic serinolysis, in which the side chain hydroxyl group of the serine supplies its oxygen atom to form the C-terminus of the beta chain, while the remainder of the serine residue undergoes an oxidative deamination to produce ammonia and the pyruvoyl prosthetic group on the alpha chain.

It localises to the cell membrane. The catalysed reaction is a 1,2-diacyl-sn-glycero-3-phospho-L-serine + H(+) = a 1,2-diacyl-sn-glycero-3-phosphoethanolamine + CO2. It participates in phospholipid metabolism; phosphatidylethanolamine biosynthesis; phosphatidylethanolamine from CDP-diacylglycerol: step 2/2. Its function is as follows. Catalyzes the formation of phosphatidylethanolamine (PtdEtn) from phosphatidylserine (PtdSer). In Neisseria meningitidis serogroup B (strain ATCC BAA-335 / MC58), this protein is Phosphatidylserine decarboxylase proenzyme.